The primary structure comprises 264 residues: tRNA (guanine-N(1)-)-methyltransferase (264 aa).

S-adenosyl-L-methionine-binding positions include G116 and V136–L141.

It belongs to the RNA methyltransferase TrmD family. Homodimer.

The protein resides in the cytoplasm. It catalyses the reaction guanosine(37) in tRNA + S-adenosyl-L-methionine = N(1)-methylguanosine(37) in tRNA + S-adenosyl-L-homocysteine + H(+). Its function is as follows. Specifically methylates guanosine-37 in various tRNAs. The protein is tRNA (guanine-N(1)-)-methyltransferase of Koribacter versatilis (strain Ellin345).